We begin with the raw amino-acid sequence, 766 residues long: Phosphoribosylformylglycinamidine synthase subunit PurL (766 aa).

Residue histidine 66 is part of the active site. Tyrosine 69 and lysine 113 together coordinate ATP. Glutamate 115 is a Mg(2+) binding site. Substrate contacts are provided by residues 116-119 (SHNH) and arginine 138. The active-site Proton acceptor is the histidine 117. Aspartate 139 serves as a coordination point for Mg(2+). Glutamine 264 contributes to the substrate binding site. Mg(2+) is bound at residue aspartate 292. A substrate-binding site is contributed by 336-338 (ESQ). Positions 524 and 561 each coordinate ATP. A Mg(2+)-binding site is contributed by asparagine 562. Position 564 (serine 564) interacts with substrate.

It belongs to the FGAMS family. Monomer. Part of the FGAM synthase complex composed of 1 PurL, 1 PurQ and 2 PurS subunits.

It localises to the cytoplasm. It catalyses the reaction N(2)-formyl-N(1)-(5-phospho-beta-D-ribosyl)glycinamide + L-glutamine + ATP + H2O = 2-formamido-N(1)-(5-O-phospho-beta-D-ribosyl)acetamidine + L-glutamate + ADP + phosphate + H(+). It functions in the pathway purine metabolism; IMP biosynthesis via de novo pathway; 5-amino-1-(5-phospho-D-ribosyl)imidazole from N(2)-formyl-N(1)-(5-phospho-D-ribosyl)glycinamide: step 1/2. Part of the phosphoribosylformylglycinamidine synthase complex involved in the purines biosynthetic pathway. Catalyzes the ATP-dependent conversion of formylglycinamide ribonucleotide (FGAR) and glutamine to yield formylglycinamidine ribonucleotide (FGAM) and glutamate. The FGAM synthase complex is composed of three subunits. PurQ produces an ammonia molecule by converting glutamine to glutamate. PurL transfers the ammonia molecule to FGAR to form FGAM in an ATP-dependent manner. PurS interacts with PurQ and PurL and is thought to assist in the transfer of the ammonia molecule from PurQ to PurL. This Mycobacterium bovis (strain BCG / Pasteur 1173P2) protein is Phosphoribosylformylglycinamidine synthase subunit PurL.